Here is a 103-residue protein sequence, read N- to C-terminus: MNHGRQSLLPTPNPRPGLRLLCVLVRKAGHPIAQPVAVSGLPAPWAALSGRWPLALPSPFLLRETRPVPASAEVLARCVRQRETHALCARARRLPTGGLTHAR.

The protein is 11.2 kDa protein of Pseudomonas phage Pf1 (Bacteriophage Pf1).